A 562-amino-acid chain; its full sequence is Potassium-transporting ATPase potassium-binding subunit (562 aa).

Helical transmembrane passes span 6-26 (FLLIASFMVVLFVLSRPLGGF), 63-83 (ALAILCFNLLGIVLLFVLLMA), 132-152 (GLTVQNFLSAATGIAVAFALI), 175-195 (LYVLLPIALIIALIFVSQGVL), 253-273 (FVQMLAIFLIPCALCFAFGQV), 283-303 (LIWAMSLIFIVAVVVVMYAEL), 327-347 (FGILATSLYAVVTTAASCGAV), 356-376 (ALGGMIPLWLMQIGEVVFGGV), 379-399 (GLYGMLLFVLLTVFIAGLMIG), 416-436 (MTALAILVTPTIVLLGTALAL), 483-503 (LLLAAAMFIGRFGVILPVLAI), and 526-546 (LFIGLLIGTVLLVGALTFIPA).

This sequence belongs to the KdpA family. As to quaternary structure, the system is composed of three essential subunits: KdpA, KdpB and KdpC.

The protein resides in the cell inner membrane. Functionally, part of the high-affinity ATP-driven potassium transport (or Kdp) system, which catalyzes the hydrolysis of ATP coupled with the electrogenic transport of potassium into the cytoplasm. This subunit binds the periplasmic potassium ions and delivers the ions to the membrane domain of KdpB through an intramembrane tunnel. The protein is Potassium-transporting ATPase potassium-binding subunit of Yersinia pseudotuberculosis serotype O:1b (strain IP 31758).